A 371-amino-acid chain; its full sequence is 43 kDa relaxation protein (371 aa).

Disordered regions lie at residues 1-46, 150-172, 196-221, 263-291, and 328-371; these read MASY…GNMP, KEPD…AKNT, RVDS…GQVQ, SERD…FDFE, and IHQE…SFSR. A compositionally biased stretch (basic and acidic residues) spans 22–42; sequence YIAREGKYAREKDSDLEHKES. Basic residues predominate over residues 157–168; that stretch reads QKRHVSGKHRPN. Basic and acidic residues predominate over residues 196 to 215; the sequence is RVDSRSLKAQGIDREPERHL. The segment covering 330–365 has biased composition (basic and acidic residues); it reads QEMERQRERERLAEKQRQQEKERQRLAEQIRQKPDK.

The protein belongs to the MobA/MobL family.

In terms of biological role, this protein is probably required for relaxation complex formation. In Salmonella typhimurium, this protein is 43 kDa relaxation protein.